Here is a 520-residue protein sequence, read N- to C-terminus: Glutamate--cysteine ligase (520 aa).

This sequence belongs to the glutamate--cysteine ligase type 1 family. Type 1 subfamily.

It carries out the reaction L-cysteine + L-glutamate + ATP = gamma-L-glutamyl-L-cysteine + ADP + phosphate + H(+). It functions in the pathway sulfur metabolism; glutathione biosynthesis; glutathione from L-cysteine and L-glutamate: step 1/2. This Serratia proteamaculans (strain 568) protein is Glutamate--cysteine ligase.